Here is a 762-residue protein sequence, read N- to C-terminus: cGMP-dependent protein kinase 2 (762 aa).

The interval 1–26 is disordered; it reads MGNGSVKPKHAKHPDGHSGNLSNEAL. A lipid anchor (N-myristoyl glycine) is attached at Gly-2. Phosphoserine occurs at positions 110 and 117. The tract at residues 118 to 138 is disordered; that stretch reads RRGAKAGVSAEPTTRTYDLNK. The segment at 168 to 283 is cGMP-binding, high affinity; cAMP-binding, moderate affinity; sequence FLKRLDPQQI…DEEYRNFLRS (116 aa). Residues 232-235, 242-243, Lys-347, 356-359, 366-367, Asp-412, and Arg-415 each bind 3',5'-cyclic GMP; these read GELA, RT, GEKA, and RS. Residues 286–416 form a cGMP-binding, high affinity; cAMP-binding, low affinity region; sequence LLKNLPEDKL…TLNRDDEKRH (131 aa). Ser-431 is modified (phosphoserine). Positions 453–711 constitute a Protein kinase domain; that stretch reads LEIIATLGVG…INDIKKHRWL (259 aa). ATP contacts are provided by residues 459 to 467 and Lys-482; that span reads LGVGGFGRV. Asp-576 serves as the catalytic Proton acceptor. Thr-609 is subject to Phosphothreonine. The AGC-kinase C-terminal domain maps to 712–762; sequence NGFNWEGLKARSLPSPLRRELSGPIDHSYFDKYPPEKGVPPDEMSGWDKDF. Residues 740–762 are disordered; that stretch reads YFDKYPPEKGVPPDEMSGWDKDF.

It belongs to the protein kinase superfamily. AGC Ser/Thr protein kinase family. cGMP subfamily. As to quaternary structure, interacts with GRIA1/GLUR1. Post-translationally, myristoylation mediates membrane localization.

The protein resides in the apical cell membrane. It is found in the cell membrane. It catalyses the reaction L-seryl-[protein] + ATP = O-phospho-L-seryl-[protein] + ADP + H(+). The enzyme catalyses L-threonyl-[protein] + ATP = O-phospho-L-threonyl-[protein] + ADP + H(+). With respect to regulation, binding of cGMP results in enzyme activation. Its function is as follows. Crucial regulator of intestinal secretion and bone growth. Phosphorylates and activates CFTR on the plasma membrane. Plays a key role in intestinal secretion by regulating cGMP-dependent translocation of CFTR in jejunum. Acts downstream of NMDAR to activate the plasma membrane accumulation of GRIA1/GLUR1 in synapse and increase synaptic plasticity. Phosphorylates GRIA1/GLUR1 at Ser-863. Acts as a regulator of gene expression and activator of the extracellular signal-regulated kinases MAPK3/ERK1 and MAPK1/ERK2 in mechanically stimulated osteoblasts. Under fluid shear stress, mediates ERK activation and subsequent induction of FOS, FOSL1/FRA1, FOSL2/FRA2 and FOSB that play a key role in the osteoblast anabolic response to mechanical stimulation. This is cGMP-dependent protein kinase 2 (Prkg2) from Mus musculus (Mouse).